A 1827-amino-acid polypeptide reads, in one-letter code: Phenolphthiocerol/phthiocerol polyketide synthase subunit C (1827 aa).

The 427-residue stretch at 35–461 (CEPVAVVGIG…GTNAHVVVEQ (427 aa)) folds into the Ketosynthase family 3 (KS3) domain. Residues Cys207, His342, and His383 each act as for beta-ketoacyl synthase activity in the active site. Residues 566–876 (VFVYSGQGSQ…LAAVGVAASE (311 aa)) form an acyltransferase region. Ser654 (for malonyltransferase activity) is an active-site residue. The segment at 910-1037 (HPLLGAHIEM…AKVEQSPREC (128 aa)) is N-terminal hotdog fold. Residues 910 to 1076 (HPLLGAHIEM…QHHGPAFAAL (167 aa)) are dehydratase. The region spanning 910 to 1198 (HPLLGAHIEM…LRRVERRAVP (289 aa)) is the PKS/mFAS DH domain. His942 functions as the Proton acceptor; for dehydratase activity in the catalytic mechanism. The C-terminal hotdog fold stretch occupies residues 1050–1198 (GTTVSPADFY…LRRVERRAVP (149 aa)). Asp1111 serves as the catalytic Proton donor; for dehydratase activity. The tract at residues 1439-1617 (ASYVVTGGLG…VINWGPWSEV (179 aa)) is beta-ketoacyl reductase. 1440–1485 (SYVVTGGLGGLGLVVARWLVDRGAGRVVLGGRSDPTDEQCNVLAEL) provides a ligand contact to NADP(+). One can recognise a Carrier domain in the interval 1706-1785 (RAVTERMCAR…DLTADLMRQL (80 aa)). Ser1745 carries the post-translational modification O-(pantetheine 4'-phosphoryl)serine.

NADP(+) serves as cofactor. The cofactor is pantetheine 4'-phosphate.

The catalysed reaction is icosanoyl-[(phenol)carboxyphthiodiolenone synthase] + 2 (S)-methylmalonyl-CoA + 3 malonyl-CoA + 5 NADPH + 10 H(+) = C32-carboxyphthiodiolenone-[(phenol)carboxyphthiodiolenone synthase] + 5 CO2 + 5 NADP(+) + 5 CoA + 2 H2O. It carries out the reaction docosanoyl-[(phenol)carboxyphthiodiolenone synthase] + 2 (S)-methylmalonyl-CoA + 3 malonyl-CoA + 5 NADPH + 10 H(+) = C34-carboxyphthiodiolenone-[(phenol)carboxyphthiodiolenone synthase] + 5 CO2 + 5 NADP(+) + 5 CoA + 2 H2O. It catalyses the reaction 17-(4-hydroxyphenyl)heptadecanoyl-[(phenol)carboxyphthiodiolenone synthase] + 2 (S)-methylmalonyl-CoA + 3 malonyl-CoA + 5 NADPH + 10 H(+) = C35-(phenol)carboxyphthiodiolenone-[(phenol)carboxyphthiodiolenone synthase] + 5 CO2 + 5 NADP(+) + 5 CoA + 2 H2O. The enzyme catalyses 19-(4-hydroxyphenyl)nonadecanoyl-[(phenol)carboxyphthiodiolenone synthase] + 2 (S)-methylmalonyl-CoA + 3 malonyl-CoA + 5 NADPH + 10 H(+) = C37-(phenol)carboxyphthiodiolenone-[(phenol)carboxyphthiodiolenone synthase] + 5 CO2 + 5 NADP(+) + 5 CoA + 2 H2O. Its pathway is lipid metabolism; fatty acid biosynthesis. Its function is as follows. Part of the PpsABCDE complex involved in the biosynthesis of the lipid core common to phthiocerols and phenolphthiocerols by successive additions of malonyl-CoA or methylmalonyl-CoA extender units. PpsA can accept as substrate the activated forms of either icosanoyl (C20), docosanoyl (C22) or lignoceroyl (C24) groups from FadD26, or a (4-hydroxyphenyl)-C17 or (4-hydroxyphenyl)-C19 fatty acyl from FadD29. PpsA initiates the biosynthesis and extends its substrate using a malonyl-CoA extender unit. The PpsB and PpsC proteins add the second and third malonyl-CoA extender units. PpsD adds an (R)-methylmalonyl unit and PpsE adds a second (R)-methylmalonyl unit. The incorporation of the methylmalonyl units results in formation of two branched methyl groups in the elongated product. The polypeptide is Phenolphthiocerol/phthiocerol polyketide synthase subunit C (ppsD) (Mycobacterium bovis (strain ATCC BAA-935 / AF2122/97)).